A 251-amino-acid chain; its full sequence is Triosephosphate isomerase (251 aa).

Residue Asn-9–Lys-11 participates in substrate binding. The Electrophile role is filled by His-95. Glu-167 functions as the Proton acceptor in the catalytic mechanism. Residues Gly-173, Ser-213, and Gly-234–Gly-235 contribute to the substrate site.

This sequence belongs to the triosephosphate isomerase family. As to quaternary structure, homodimer.

It is found in the cytoplasm. It catalyses the reaction D-glyceraldehyde 3-phosphate = dihydroxyacetone phosphate. The protein operates within carbohydrate biosynthesis; gluconeogenesis. Its pathway is carbohydrate degradation; glycolysis; D-glyceraldehyde 3-phosphate from glycerone phosphate: step 1/1. Its function is as follows. Involved in the gluconeogenesis. Catalyzes stereospecifically the conversion of dihydroxyacetone phosphate (DHAP) to D-glyceraldehyde-3-phosphate (G3P). This chain is Triosephosphate isomerase, found in Carboxydothermus hydrogenoformans (strain ATCC BAA-161 / DSM 6008 / Z-2901).